A 185-amino-acid chain; its full sequence is Elongation factor P (185 aa).

Belongs to the elongation factor P family.

It localises to the cytoplasm. Its pathway is protein biosynthesis; polypeptide chain elongation. Its function is as follows. Involved in peptide bond synthesis. Stimulates efficient translation and peptide-bond synthesis on native or reconstituted 70S ribosomes in vitro. Probably functions indirectly by altering the affinity of the ribosome for aminoacyl-tRNA, thus increasing their reactivity as acceptors for peptidyl transferase. This chain is Elongation factor P, found in Staphylococcus epidermidis (strain ATCC 35984 / DSM 28319 / BCRC 17069 / CCUG 31568 / BM 3577 / RP62A).